Here is a 490-residue protein sequence, read N- to C-terminus: Probable G-protein coupled receptor npr-8 (490 aa).

Residues 1 to 55 (MEVKDIDNYCDRGISPNASNYLTYPFDGLCLQKFFYQLQTSLRRFTPYEEIIYTT) lie on the Extracellular side of the membrane. N17 carries N-linked (GlcNAc...) asparagine glycosylation. The helical transmembrane segment at 56–76 (VYIIISVAAVIGNGLVIMAVV) threads the bilayer. The Cytoplasmic segment spans residues 77–86 (RKKTMRTNRN). A helical membrane pass occupies residues 87-107 (VLILNLALSNLILAITNIPFL). Residues 108–125 (WLPSIDFEFPYSRFFCKF) lie on the Extracellular side of the membrane. Residues 126–146 (ANVLPGSNIYCSTLTISVMAI) form a helical membrane-spanning segment. Topologically, residues 147-166 (DRYYSVKKLKIASNRKQCFH) are cytoplasmic. Residues 167–187 (AVLVSLAIWIVSFILSLPLLL) traverse the membrane as a helical segment. Residues 188-236 (YYETSMLYVMREIRVVDQSGQEVIRSYGWRQCRLVSAGRLPDITQSIQL) lie on the Extracellular side of the membrane. A helical membrane pass occupies residues 237-257 (LMSILQVAFLYIVPLFVLSIF). Residues 258 to 331 (NVKLTRFLKT…QRTNRTTSLL (74 aa)) lie on the Cytoplasmic side of the membrane. Residues 272–322 (MSKTRAPPKRFDRSDSHHNSLKNNNNHTSSLRSPSMPSIRSSITERNKTNQ) are disordered. Residues 280–289 (KRFDRSDSHH) are compositionally biased toward basic and acidic residues. The segment covering 292–313 (LKNNNNHTSSLRSPSMPSIRSS) has biased composition (low complexity). A helical transmembrane segment spans residues 332–352 (IAMAGSYAALWFPFTLITFLI). The Extracellular portion of the chain corresponds to 353–374 (DFELIINQDYVNLVERIDQTCK). The chain crosses the membrane as a helical span at residues 375–395 (MVSMLSICVNPFLYGFLNTNF). Residues 396 to 490 (RHEFSDIYYR…DDDIEKDSFV (95 aa)) lie on the Cytoplasmic side of the membrane.

It belongs to the G-protein coupled receptor 1 family.

The protein localises to the cell membrane. Not known. Putative receptor. This Caenorhabditis elegans protein is Probable G-protein coupled receptor npr-8.